A 685-amino-acid polypeptide reads, in one-letter code: MKSKKSKFITKDILKEAIIESFKKLNPKYMMKNPVMFVVEVGFFVTILLTIFPSIFGDKGHNLRVYNLIVTIILFITVLFANFAESVAEGRGKAQADALKKTRKDTIAKLIGKDGSIKTINANELKKGDVVLVENGDVIPNDGEVVDGVASVDESAITGESAPVMKEPGGDFASVTGGTKVVSDWLKVEITATPGESFLDKMINLVEGASRQKTPNEIALNTILVSLTLIFLIVLVALYPMATYTGVKIPMSTLIALLVCLIPTTIGGLLSAIGIAGMDRVTRFNVIAMSGKAVEACGDVDTMILDKTGTITYGNRLAADFITVGGADKQKLIDYSVMCSLKDDTPEGKSIVELGKQLGITIDTKKYESIEFEEFTAQTRMSGIKLENGTAVKKGAYDAIKKRVQELKGVIPKDLDEAVNKVAKLGGTPLVVCVDNKIYGVIYLKDTVKPGLVERFERLREIGIKTIMCTGDNPLTAATIAKEAGVDGFIAECKPEDKIEAIKKEQDEGKLVAMTGDGTNDAPALAQADVGLAMNSGTTAAKEAANMVDLDSDPTKVLEVVEIGKQLLITRGALTTFSIANDVAKYFAIIPAIFTIAIPKMQLMNIMHLSTPYSAILSALIFNAIIIPALIPIAMKGVKYRPMKSEALLLRNMIVFGFGGIIVPFVGIKIIDMIITPMVRILNLG.

A run of 4 helical transmembrane segments spans residues 36 to 56, 68 to 88, 218 to 238, and 255 to 275; these read MFVV…PSIF, LIVT…ESVA, IALN…LVAL, and IALL…AIGI. Catalysis depends on aspartate 306, which acts as the 4-aspartylphosphate intermediate. Residues aspartate 343, glutamate 347, 375 to 382, and lysine 394 each bind ATP; that span reads FTAQTRMS. The Mg(2+) site is built by aspartate 517 and aspartate 521. 3 helical membrane passes run 587–607, 615–635, and 654–674; these read FAII…MNIM, AILS…PIAM, and IVFG…IDMI.

Belongs to the cation transport ATPase (P-type) (TC 3.A.3) family. Type IA subfamily. As to quaternary structure, the system is composed of three essential subunits: KdpA, KdpB and KdpC.

Its subcellular location is the cell membrane. The enzyme catalyses K(+)(out) + ATP + H2O = K(+)(in) + ADP + phosphate + H(+). Its function is as follows. Part of the high-affinity ATP-driven potassium transport (or Kdp) system, which catalyzes the hydrolysis of ATP coupled with the electrogenic transport of potassium into the cytoplasm. This subunit is responsible for energy coupling to the transport system and for the release of the potassium ions to the cytoplasm. In Clostridium acetobutylicum (strain ATCC 824 / DSM 792 / JCM 1419 / IAM 19013 / LMG 5710 / NBRC 13948 / NRRL B-527 / VKM B-1787 / 2291 / W), this protein is Potassium-transporting ATPase ATP-binding subunit.